Here is a 195-residue protein sequence, read N- to C-terminus: Peptidyl-tRNA hydrolase (195 aa).

Residue Tyr-17 participates in tRNA binding. His-22 (proton acceptor) is an active-site residue. Positions 68, 70, and 116 each coordinate tRNA.

Belongs to the PTH family. Monomer.

It localises to the cytoplasm. It carries out the reaction an N-acyl-L-alpha-aminoacyl-tRNA + H2O = an N-acyl-L-amino acid + a tRNA + H(+). In terms of biological role, hydrolyzes ribosome-free peptidyl-tRNAs (with 1 or more amino acids incorporated), which drop off the ribosome during protein synthesis, or as a result of ribosome stalling. Catalyzes the release of premature peptidyl moieties from peptidyl-tRNA molecules trapped in stalled 50S ribosomal subunits, and thus maintains levels of free tRNAs and 50S ribosomes. This chain is Peptidyl-tRNA hydrolase, found in Shewanella sp. (strain MR-4).